The following is a 265-amino-acid chain: Undecaprenyl-diphosphatase (265 aa).

8 helical membrane-spanning segments follow: residues 1-21, 39-59, 86-106, 112-132, 140-160, 186-206, 219-239, and 244-264; these read MDIL…FLPI, QGLA…ILYF, WCII…GNFI, SVSV…FADA, LAQM…LAMI, FSFL…GLKL, VGVL…LSFI, and MLPF…LVWF.

Belongs to the UppP family.

It localises to the cell inner membrane. The enzyme catalyses di-trans,octa-cis-undecaprenyl diphosphate + H2O = di-trans,octa-cis-undecaprenyl phosphate + phosphate + H(+). In terms of biological role, catalyzes the dephosphorylation of undecaprenyl diphosphate (UPP). Confers resistance to bacitracin. This chain is Undecaprenyl-diphosphatase, found in Saccharophagus degradans (strain 2-40 / ATCC 43961 / DSM 17024).